The following is a 432-amino-acid chain: Adenylosuccinate synthetase (432 aa).

Residues glycine 13–lysine 19 and glycine 41–threonine 43 contribute to the GTP site. Aspartate 14 acts as the Proton acceptor in catalysis. Positions 14 and 41 each coordinate Mg(2+). IMP contacts are provided by residues aspartate 14–lysine 17, asparagine 39–histidine 42, threonine 130, arginine 144, glutamine 225, threonine 240, and arginine 304. Catalysis depends on histidine 42, which acts as the Proton donor. Residue alanine 300–arginine 306 coordinates substrate. GTP contacts are provided by residues arginine 306, lysine 332–aspartate 334, and serine 415–glycine 417.

Belongs to the adenylosuccinate synthetase family. As to quaternary structure, homodimer. Requires Mg(2+) as cofactor.

The protein resides in the cytoplasm. It catalyses the reaction IMP + L-aspartate + GTP = N(6)-(1,2-dicarboxyethyl)-AMP + GDP + phosphate + 2 H(+). It functions in the pathway purine metabolism; AMP biosynthesis via de novo pathway; AMP from IMP: step 1/2. Functionally, plays an important role in the de novo pathway of purine nucleotide biosynthesis. Catalyzes the first committed step in the biosynthesis of AMP from IMP. The chain is Adenylosuccinate synthetase from Yersinia enterocolitica serotype O:8 / biotype 1B (strain NCTC 13174 / 8081).